We begin with the raw amino-acid sequence, 699 residues long: tRNA 5-methylaminomethyl-2-thiouridine biosynthesis bifunctional protein MnmC (699 aa).

Residues 1 to 260 (MTAKPQKSCQ…ERKLLRQQAD (260 aa)) form a tRNA (mnm(5)s(2)U34)-methyltransferase region. An FAD-dependent cmnm(5)s(2)U34 oxidoreductase region spans residues 282–699 (VGGGLASANL…LRKLLKGKAL (418 aa)).

In the N-terminal section; belongs to the methyltransferase superfamily. tRNA (mnm(5)s(2)U34)-methyltransferase family. This sequence in the C-terminal section; belongs to the DAO family. FAD serves as cofactor.

The protein localises to the cytoplasm. The enzyme catalyses 5-aminomethyl-2-thiouridine(34) in tRNA + S-adenosyl-L-methionine = 5-methylaminomethyl-2-thiouridine(34) in tRNA + S-adenosyl-L-homocysteine + H(+). Its function is as follows. Catalyzes the last two steps in the biosynthesis of 5-methylaminomethyl-2-thiouridine (mnm(5)s(2)U) at the wobble position (U34) in tRNA. Catalyzes the FAD-dependent demodification of cmnm(5)s(2)U34 to nm(5)s(2)U34, followed by the transfer of a methyl group from S-adenosyl-L-methionine to nm(5)s(2)U34, to form mnm(5)s(2)U34. In Shewanella sp. (strain MR-4), this protein is tRNA 5-methylaminomethyl-2-thiouridine biosynthesis bifunctional protein MnmC.